Reading from the N-terminus, the 374-residue chain is NADH-quinone oxidoreductase subunit D 1 (374 aa).

It belongs to the complex I 49 kDa subunit family. In terms of assembly, NDH-1 is composed of 14 different subunits. Subunits NuoB, C, D, E, F, and G constitute the peripheral sector of the complex.

The protein resides in the cell membrane. The enzyme catalyses a quinone + NADH + 5 H(+)(in) = a quinol + NAD(+) + 4 H(+)(out). In terms of biological role, NDH-1 shuttles electrons from NADH, via FMN and iron-sulfur (Fe-S) centers, to quinones in the respiratory chain. The immediate electron acceptor for the enzyme in this species is believed to be ubiquinone. Couples the redox reaction to proton translocation (for every two electrons transferred, four hydrogen ions are translocated across the cytoplasmic membrane), and thus conserves the redox energy in a proton gradient. This chain is NADH-quinone oxidoreductase subunit D 1, found in Roseiflexus sp. (strain RS-1).